The following is a 267-amino-acid chain: Electron transfer flavoprotein subunit beta (267 aa).

Belongs to the ETF beta-subunit/FixA family. As to quaternary structure, heterodimer of an alpha and a beta subunit.

Functionally, participates in the electron transfer process during N,N-dimethylglycine (DMG) degradation to sarcosine. This is Electron transfer flavoprotein subunit beta from Chromohalobacter salexigens (strain ATCC BAA-138 / DSM 3043 / CIP 106854 / NCIMB 13768 / 1H11).